Reading from the N-terminus, the 196-residue chain is uncharacterized protein (196 aa).

This sequence to E.coli YjaG.

This is an uncharacterized protein from Haemophilus influenzae (strain ATCC 51907 / DSM 11121 / KW20 / Rd).